A 485-amino-acid chain; its full sequence is Carbohydrate sulfotransferase 7 (485 aa).

The Cytoplasmic segment spans residues 1-12; that stretch reads MKGRRRRRREYC. The helical; Signal-anchor for type II membrane protein transmembrane segment at 13–33 threads the bilayer; that stretch reads KFTLLLALYTLLLLLVPSVLD. Residues 34–485 are Lumenal-facing; that stretch reads SGSEQDKGGR…PLETNANWAT (452 aa). Positions 66–88 are disordered; it reads EQGAEVRFQAEGNPDRSPRPQGN. A glycan (N-linked (GlcNAc...) asparagine) is linked at N88. Residue 109–115 participates in 3'-phosphoadenylyl sulfate binding; it reads WRTGSSF. Residue N185 is glycosylated (N-linked (GlcNAc...) asparagine). Position 277–285 (277–285) interacts with 3'-phosphoadenylyl sulfate; it reads RDPRAVHNS. N406 carries an N-linked (GlcNAc...) asparagine glycan. Residue S461 is modified to Phosphoserine. The span at 465–475 shows a compositional bias: basic and acidic residues; sequence RDVKTVRKGET. The segment at 465–485 is disordered; sequence RDVKTVRKGETPLETNANWAT.

The protein belongs to the sulfotransferase 1 family. Gal/GlcNAc/GalNAc subfamily.

The protein resides in the golgi apparatus membrane. The enzyme catalyses chondroitin beta-D-glucuronate + n 3'-phosphoadenylyl sulfate = chondroitin 6'-sulfate + n adenosine 3',5'-bisphosphate + n H(+). In terms of biological role, sulfotransferase that utilizes 3'-phospho-5'-adenylyl sulfate (PAPS) as sulfonate donor to catalyze the transfer of sulfate to position 6 of non-reducing N-acetylglucosamine (GlcNAc) residues. Preferentially acts on mannose-linked GlcNAc. Also able to catalyze the transfer of sulfate to position 6 of the N-acetylgalactosamine (GalNAc) residue of chondroitin. Also acts on core 2 mucin-type oligosaccharide and N-acetyllactosamine oligomer with a lower efficiency. Has weak or no activity toward keratan sulfate and oligosaccharides containing the Galbeta1-4GlcNAc. Catalyzes 6-O-sulfation of beta-benzyl GlcNAc but not alpha- or beta-benzyl GalNAc. This chain is Carbohydrate sulfotransferase 7 (Chst7), found in Rattus norvegicus (Rat).